The primary structure comprises 167 residues: Transcriptional regulator MraZ (167 aa).

SpoVT-AbrB domains follow at residues Glu-8–His-51 and Ser-92–Thr-135.

It belongs to the MraZ family. As to quaternary structure, forms oligomers.

It is found in the cytoplasm. The protein localises to the nucleoid. The chain is Transcriptional regulator MraZ from Ruegeria sp. (strain TM1040) (Silicibacter sp.).